A 415-amino-acid chain; its full sequence is Serine hydroxymethyltransferase (415 aa).

(6S)-5,6,7,8-tetrahydrofolate is bound by residues L117 and G121–L123. K226 carries the post-translational modification N6-(pyridoxal phosphate)lysine.

This sequence belongs to the SHMT family. In terms of assembly, homodimer. The cofactor is pyridoxal 5'-phosphate.

The protein resides in the cytoplasm. The catalysed reaction is (6R)-5,10-methylene-5,6,7,8-tetrahydrofolate + glycine + H2O = (6S)-5,6,7,8-tetrahydrofolate + L-serine. The protein operates within one-carbon metabolism; tetrahydrofolate interconversion. It functions in the pathway amino-acid biosynthesis; glycine biosynthesis; glycine from L-serine: step 1/1. In terms of biological role, catalyzes the reversible interconversion of serine and glycine with tetrahydrofolate (THF) serving as the one-carbon carrier. This reaction serves as the major source of one-carbon groups required for the biosynthesis of purines, thymidylate, methionine, and other important biomolecules. Also exhibits THF-independent aldolase activity toward beta-hydroxyamino acids, producing glycine and aldehydes, via a retro-aldol mechanism. The chain is Serine hydroxymethyltransferase from Dehalococcoides mccartyi (strain ATCC BAA-2100 / JCM 16839 / KCTC 5957 / BAV1).